The primary structure comprises 361 residues: MNDLDQLEKKIMDEIAEAGDEQTVEAVRVAALGKKGTVSEKLKTLGSMSPEERQVMGPAINGLKNRVTEALAARRAELRDIAIAARLEREKVDVTLPMPRPPAERGRIHPITQVIDEIAAIFGDLGFSIAEGPDIETDYYNFTALNFPEGHPAREMHDTFFFEPDEKGERKLLRTHTSPVQIRTMEAQKPPIRIVIPGKTYRSDSDATHTPMFHQLEGLVIDKTANVANMKWVLTEFCKAYFEVPSLNMRFRPSFFPFTEPSLEVDIQCDRSKPGEIRFGEGNDWLEILGCGMVHSNVLRHGGLDPDEYQGFAWGMGIDRIAMLKYGMPDLRAFFDADVRWLEHYGFRPLDLPTLFGGLSS.

Glu260 is a Mg(2+) binding site.

The protein belongs to the class-II aminoacyl-tRNA synthetase family. Phe-tRNA synthetase alpha subunit type 1 subfamily. As to quaternary structure, tetramer of two alpha and two beta subunits. The cofactor is Mg(2+).

It localises to the cytoplasm. The enzyme catalyses tRNA(Phe) + L-phenylalanine + ATP = L-phenylalanyl-tRNA(Phe) + AMP + diphosphate + H(+). The chain is Phenylalanine--tRNA ligase alpha subunit from Chelativorans sp. (strain BNC1).